Reading from the N-terminus, the 518-residue chain is WEB family protein At2g40480 (518 aa).

Coiled coils occupy residues 95–141 and 188–219; these read DIKR…LQQE and DNLV…AKLT. The tract at residues 303 to 337 is disordered; that stretch reads NGESQDDDSEFCFPEPPRSPVTPRGLRIDNDFSTD. Over residues 328-337 the composition is skewed to basic and acidic residues; sequence LRIDNDFSTD. Residues 344–375 are a coiled coil; that stretch reads ILKKLEEATEGVKQSKQALEAALNRVEIANVK.

This sequence belongs to the WEB family.

This Arabidopsis thaliana (Mouse-ear cress) protein is WEB family protein At2g40480.